We begin with the raw amino-acid sequence, 137 residues long: Large ribosomal subunit protein uL16 (137 aa).

Belongs to the universal ribosomal protein uL16 family. Part of the 50S ribosomal subunit.

In terms of biological role, binds 23S rRNA and is also seen to make contacts with the A and possibly P site tRNAs. This chain is Large ribosomal subunit protein uL16, found in Streptococcus mutans serotype c (strain ATCC 700610 / UA159).